The sequence spans 336 residues: Ketol-acid reductoisomerase (NADP(+)) 1 (336 aa).

One can recognise a KARI N-terminal Rossmann domain in the interval 2 to 181 (AKVYYEKDVT…GATRAGVLET (180 aa)). NADP(+) contacts are provided by residues 25–28 (YGSQ), R48, S52, and 82–85 (DELQ). H107 is an active-site residue. Residue G133 coordinates NADP(+). In terms of domain architecture, KARI C-terminal knotted spans 182–327 (TFKEETETDL…RKLREMMPFV (146 aa)). 4 residues coordinate Mg(2+): D190, E194, E226, and E230. S251 serves as a coordination point for substrate.

Belongs to the ketol-acid reductoisomerase family. It depends on Mg(2+) as a cofactor.

It catalyses the reaction (2R)-2,3-dihydroxy-3-methylbutanoate + NADP(+) = (2S)-2-acetolactate + NADPH + H(+). The catalysed reaction is (2R,3R)-2,3-dihydroxy-3-methylpentanoate + NADP(+) = (S)-2-ethyl-2-hydroxy-3-oxobutanoate + NADPH + H(+). The protein operates within amino-acid biosynthesis; L-isoleucine biosynthesis; L-isoleucine from 2-oxobutanoate: step 2/4. Its pathway is amino-acid biosynthesis; L-valine biosynthesis; L-valine from pyruvate: step 2/4. Its function is as follows. Involved in the biosynthesis of branched-chain amino acids (BCAA). Catalyzes an alkyl-migration followed by a ketol-acid reduction of (S)-2-acetolactate (S2AL) to yield (R)-2,3-dihydroxy-isovalerate. In the isomerase reaction, S2AL is rearranged via a Mg-dependent methyl migration to produce 3-hydroxy-3-methyl-2-ketobutyrate (HMKB). In the reductase reaction, this 2-ketoacid undergoes a metal-dependent reduction by NADPH to yield (R)-2,3-dihydroxy-isovalerate. This is Ketol-acid reductoisomerase (NADP(+)) 1 from Bacillus cereus (strain ZK / E33L).